The sequence spans 681 residues: Methionine--tRNA ligase (681 aa).

Residues 14-24 (PYANGSIHLGH) carry the 'HIGH' region motif. Residues C145, C148, C158, and C161 each contribute to the Zn(2+) site. The short motif at 331-335 (KMSKS) is the 'KMSKS' region element. ATP is bound at residue K334. One can recognise a tRNA-binding domain in the interval 579–681 (AFAAVDLRIA…AGAKPGQRVH (103 aa)).

Belongs to the class-I aminoacyl-tRNA synthetase family. MetG type 1 subfamily. In terms of assembly, homodimer. Zn(2+) serves as cofactor.

It is found in the cytoplasm. It catalyses the reaction tRNA(Met) + L-methionine + ATP = L-methionyl-tRNA(Met) + AMP + diphosphate. Functionally, is required not only for elongation of protein synthesis but also for the initiation of all mRNA translation through initiator tRNA(fMet) aminoacylation. In Azotobacter vinelandii (strain DJ / ATCC BAA-1303), this protein is Methionine--tRNA ligase.